A 115-amino-acid polypeptide reads, in one-letter code: DNA-binding protein TV0008 (115 aa).

Residues 18–37 form a disordered region; it reads LQRQAMQRQMAEEEEKQREI.

Belongs to the PDCD5 family.

This Thermoplasma volcanium (strain ATCC 51530 / DSM 4299 / JCM 9571 / NBRC 15438 / GSS1) protein is DNA-binding protein TV0008.